Reading from the N-terminus, the 323-residue chain is Phospho-N-acetylmuramoyl-pentapeptide-transferase (323 aa).

9 helical membrane passes run 12 to 32, 58 to 78, 84 to 104, 120 to 140, 151 to 171, 177 to 197, 200 to 220, 229 to 250, and 303 to 323; these read IVMA…IIIP, PTIG…IMVG, AMIA…DDLL, MILL…YIGT, INFG…VTNA, GLDG…GIIS, LGHI…LAFL, VFMG…ALIL, and KIVS…FASL.

The protein belongs to the glycosyltransferase 4 family. MraY subfamily. It depends on Mg(2+) as a cofactor.

Its subcellular location is the cell membrane. It catalyses the reaction UDP-N-acetyl-alpha-D-muramoyl-L-alanyl-gamma-D-glutamyl-meso-2,6-diaminopimeloyl-D-alanyl-D-alanine + di-trans,octa-cis-undecaprenyl phosphate = di-trans,octa-cis-undecaprenyl diphospho-N-acetyl-alpha-D-muramoyl-L-alanyl-D-glutamyl-meso-2,6-diaminopimeloyl-D-alanyl-D-alanine + UMP. Its pathway is cell wall biogenesis; peptidoglycan biosynthesis. Functionally, catalyzes the initial step of the lipid cycle reactions in the biosynthesis of the cell wall peptidoglycan: transfers peptidoglycan precursor phospho-MurNAc-pentapeptide from UDP-MurNAc-pentapeptide onto the lipid carrier undecaprenyl phosphate, yielding undecaprenyl-pyrophosphoryl-MurNAc-pentapeptide, known as lipid I. The sequence is that of Phospho-N-acetylmuramoyl-pentapeptide-transferase from Clostridium perfringens (strain ATCC 13124 / DSM 756 / JCM 1290 / NCIMB 6125 / NCTC 8237 / Type A).